Consider the following 474-residue polypeptide: Eukaryotic translation initiation factor 3 subunit L (474 aa).

In terms of domain architecture, PCI spans 255–449; it reads DAIRMFSHIL…DLDYALQGDL (195 aa).

It belongs to the eIF-3 subunit L family. In terms of assembly, component of the eukaryotic translation initiation factor 3 (eIF-3) complex.

It localises to the cytoplasm. Functionally, component of the eukaryotic translation initiation factor 3 (eIF-3) complex, which is involved in protein synthesis of a specialized repertoire of mRNAs and, together with other initiation factors, stimulates binding of mRNA and methionyl-tRNAi to the 40S ribosome. The eIF-3 complex specifically targets and initiates translation of a subset of mRNAs involved in cell proliferation. The chain is Eukaryotic translation initiation factor 3 subunit L from Chaetomium globosum (strain ATCC 6205 / CBS 148.51 / DSM 1962 / NBRC 6347 / NRRL 1970) (Soil fungus).